Reading from the N-terminus, the 288-residue chain is Oxaloacetate decarboxylase (288 aa).

A substrate-binding site is contributed by S47. D85 lines the Mg(2+) pocket. Positions 156 and 232 each coordinate substrate.

This sequence belongs to the isocitrate lyase/PEP mutase superfamily. Oxaloacetate decarboxylase family. In terms of assembly, homotetramer; dimer of dimers. Requires Mg(2+) as cofactor.

The catalysed reaction is oxaloacetate + H(+) = pyruvate + CO2. Functionally, catalyzes the decarboxylation of oxaloacetate into pyruvate. Seems to play a role in maintaining cellular concentrations of bicarbonate and pyruvate. The polypeptide is Oxaloacetate decarboxylase (Bradyrhizobium diazoefficiens (strain JCM 10833 / BCRC 13528 / IAM 13628 / NBRC 14792 / USDA 110)).